A 347-amino-acid chain; its full sequence is 3-isopropylmalate dehydrogenase (347 aa).

The substrate site is built by arginine 94, arginine 104, arginine 128, and aspartate 219. Residues aspartate 219, aspartate 243, and aspartate 247 each coordinate Mg(2+). Position 279–291 (279–291) interacts with NAD(+); sequence GSAPDIAGQGKAD.

Belongs to the isocitrate and isopropylmalate dehydrogenases family. LeuB type 2 subfamily. As to quaternary structure, homodimer. Mg(2+) is required as a cofactor. Requires Mn(2+) as cofactor.

It localises to the cytoplasm. It carries out the reaction (2R,3S)-3-isopropylmalate + NAD(+) = 4-methyl-2-oxopentanoate + CO2 + NADH. The protein operates within amino-acid biosynthesis; L-leucine biosynthesis; L-leucine from 3-methyl-2-oxobutanoate: step 3/4. In terms of biological role, catalyzes the oxidation of 3-carboxy-2-hydroxy-4-methylpentanoate (3-isopropylmalate) to 3-carboxy-4-methyl-2-oxopentanoate. The product decarboxylates to 4-methyl-2 oxopentanoate. This chain is 3-isopropylmalate dehydrogenase, found in Streptomyces avermitilis (strain ATCC 31267 / DSM 46492 / JCM 5070 / NBRC 14893 / NCIMB 12804 / NRRL 8165 / MA-4680).